Reading from the N-terminus, the 497-residue chain is Intermediate filament protein A (497 aa).

Positions 1–32 (MSDLNDRLASYIEKVRFLEAQNRKLAADLDLL) are coil 1A. The IF rod domain maps to 1–342 (MSDLNDRLAS…KMLEGEENRA (342 aa)). The linker 1 stretch occupies residues 33–46 (RGRWGKDTLSVRAM). The segment at 47–184 (YEGELQEARK…RVHDQEIAEL (138 aa)) is coil 1B. The linker 12 stretch occupies residues 185 to 202 (QAMASRDTTPENREYFKN). The interval 203–342 (ELASAIRDIR…KMLEGEENRA (140 aa)) is coil 2. Positions 343-497 (GLRQLVEQVV…THIQRSSHTI (155 aa)) are tail. Residues 375–493 (SRTSFQRSAK…EERATHIQRS (119 aa)) form the LTD domain.

It belongs to the intermediate filament family. In terms of assembly, a and B can form homopolymers. Giant body muscle cells.

The protein localises to the cytoplasm. This is Intermediate filament protein A from Ascaris suum (Pig roundworm).